A 409-amino-acid polypeptide reads, in one-letter code: Probable tRNA N6-adenosine threonylcarbamoyltransferase, mitochondrial (409 aa).

The N-terminal 31 residues, 1–31, are a transit peptide targeting the mitochondrion; it reads MHALRNFAGNGIANVFGCGIRRRLSYVLGIE. Positions 135 and 139 each coordinate a divalent metal cation. Substrate contacts are provided by residues 159 to 163, Asp192, Gly212, Glu216, 322 to 323, and Ser350; these read LASGG and NN. Asp351 contacts a divalent metal cation.

It belongs to the KAE1 / TsaD family. As to quaternary structure, homodimer. The cofactor is a divalent metal cation.

It localises to the mitochondrion. It catalyses the reaction L-threonylcarbamoyladenylate + adenosine(37) in tRNA = N(6)-L-threonylcarbamoyladenosine(37) in tRNA + AMP + H(+). Required for the formation of a threonylcarbamoyl group on adenosine at position 37 (t(6)A37) in mitochondrial tRNAs that read codons beginning with adenine. Probably involved in the transfer of the threonylcarbamoyl moiety of threonylcarbamoyl-AMP (TC-AMP) to the N6 group of A37. Involved in mitochondrial genome maintenance. The chain is Probable tRNA N6-adenosine threonylcarbamoyltransferase, mitochondrial from Drosophila melanogaster (Fruit fly).